Consider the following 110-residue polypeptide: Nucleotide-binding protein HI1146 homolog (110 aa).

This sequence belongs to the RapZ-like family.

Its function is as follows. Displays ATPase and GTPase activities. This is Nucleotide-binding protein HI1146 homolog from Aggregatibacter actinomycetemcomitans (Actinobacillus actinomycetemcomitans).